The sequence spans 411 residues: Coiled-coil domain-containing protein 159 (411 aa).

The disordered stretch occupies residues 84–113 (EQAGKSGAWEKEWDSEPQPHEGTPCSSSDV). Over residues 91 to 102 (AWEKEWDSEPQP) the composition is skewed to basic and acidic residues. Residues 269 to 305 (EELELVREEVTFIYQKLQDQEDEISENLLNIQKMQKT) are a coiled coil. The tract at residues 372–411 (RASSLRGQKGHQCKSSQCPSWDSDSDWERPFSKSGSYPPA) is disordered. Residues 384–393 (CKSSQCPSWD) are compositionally biased toward polar residues.

Interacts with DYNLT2. Interacts with GGNBP1. Interacts with OSBP2. Expressed in spermatids but undetectable in the spermatozoon (at protein level). Highly expressed in the testis (at protein level).

Functions during spermatid development; may participate in the centrosome reduction procedure of spermatids and is required for the formation of the connecting piece/sperm head-tail coupling apparatus (HTCA) and the correct and tight attachment of the flagellum to the nuclear envelope. The polypeptide is Coiled-coil domain-containing protein 159 (Ccdc159) (Mus musculus (Mouse)).